We begin with the raw amino-acid sequence, 149 residues long: Arginine repressor (149 aa).

This sequence belongs to the ArgR family.

It is found in the cytoplasm. It functions in the pathway amino-acid biosynthesis; L-arginine biosynthesis [regulation]. Functionally, regulates arginine biosynthesis genes. This is Arginine repressor from Chlorobium phaeobacteroides (strain DSM 266 / SMG 266 / 2430).